The sequence spans 432 residues: D-amino acid dehydrogenase (432 aa).

3–17 (VVILGSGVVGVTSAW) provides a ligand contact to FAD.

It belongs to the DadA oxidoreductase family. It depends on FAD as a cofactor.

The catalysed reaction is a D-alpha-amino acid + A + H2O = a 2-oxocarboxylate + AH2 + NH4(+). It functions in the pathway amino-acid degradation; D-alanine degradation; NH(3) and pyruvate from D-alanine: step 1/1. Functionally, oxidative deamination of D-amino acids. This is D-amino acid dehydrogenase from Salmonella dublin (strain CT_02021853).